Consider the following 261-residue polypeptide: Acyl-[acyl-carrier-protein]--UDP-N-acetylglucosamine O-acyltransferase (261 aa).

It belongs to the transferase hexapeptide repeat family. LpxA subfamily. Homotrimer.

The protein resides in the cytoplasm. It carries out the reaction a (3R)-hydroxyacyl-[ACP] + UDP-N-acetyl-alpha-D-glucosamine = a UDP-3-O-[(3R)-3-hydroxyacyl]-N-acetyl-alpha-D-glucosamine + holo-[ACP]. It functions in the pathway glycolipid biosynthesis; lipid IV(A) biosynthesis; lipid IV(A) from (3R)-3-hydroxytetradecanoyl-[acyl-carrier-protein] and UDP-N-acetyl-alpha-D-glucosamine: step 1/6. Its function is as follows. Involved in the biosynthesis of lipid A, a phosphorylated glycolipid that anchors the lipopolysaccharide to the outer membrane of the cell. This is Acyl-[acyl-carrier-protein]--UDP-N-acetylglucosamine O-acyltransferase from Aquifex aeolicus (strain VF5).